We begin with the raw amino-acid sequence, 119 residues long: Protein TusC (119 aa).

This sequence belongs to the DsrF/TusC family. As to quaternary structure, heterohexamer, formed by a dimer of trimers. The hexameric TusBCD complex contains 2 copies each of TusB, TusC and TusD. The TusBCD complex interacts with TusE.

It localises to the cytoplasm. Part of a sulfur-relay system required for 2-thiolation of 5-methylaminomethyl-2-thiouridine (mnm(5)s(2)U) at tRNA wobble positions. This Buchnera aphidicola subsp. Acyrthosiphon pisum (strain 5A) protein is Protein TusC.